Here is a 234-residue protein sequence, read N- to C-terminus: Probable transcriptional regulatory protein Pfl01_3677 (234 aa).

The protein belongs to the TACO1 family.

It localises to the cytoplasm. In Pseudomonas fluorescens (strain Pf0-1), this protein is Probable transcriptional regulatory protein Pfl01_3677.